Reading from the N-terminus, the 225-residue chain is UPF0758 protein Shewmr4_3597 (225 aa).

In terms of domain architecture, MPN spans 102-224 (VLTNPDLTRD…IVSFAERGWI (123 aa)). Residues H173, H175, and D186 each coordinate Zn(2+). The JAMM motif signature appears at 173-186 (HNHPSGIAEPSQAD).

The protein belongs to the UPF0758 family.

The chain is UPF0758 protein Shewmr4_3597 from Shewanella sp. (strain MR-4).